A 239-amino-acid chain; its full sequence is MAEWIYQYPPLLAGTLLQRYKRFFADIELESGEVITAHCPNTGPMTGISTPGSRVQVSRSNNPNRKLAYTWEMIQVEDTEPTWVGVNTGLPNQVTKLVLAAHLIPELGDYDQIRFEVPYGSEKSRVDFLLTGSDRPPTYVEVKSTTWTKGQLALFPDTVTTRGQKHIRELMALLPAHQAVMLYFINRGDCHQFAPGESADPVYAQLLRTAVAAGLQVLPCRFEITPEGICYLGLADLVL.

The protein belongs to the SfsA family.

The sequence is that of Sugar fermentation stimulation protein homolog from Cyanothece sp. (strain PCC 7425 / ATCC 29141).